The sequence spans 270 residues: Putative pyruvate, phosphate dikinase regulatory protein (270 aa).

151-158 contacts ADP; that stretch reads GVSRTSKT.

The protein belongs to the pyruvate, phosphate/water dikinase regulatory protein family. PDRP subfamily.

The catalysed reaction is N(tele)-phospho-L-histidyl/L-threonyl-[pyruvate, phosphate dikinase] + ADP = N(tele)-phospho-L-histidyl/O-phospho-L-threonyl-[pyruvate, phosphate dikinase] + AMP + H(+). It catalyses the reaction N(tele)-phospho-L-histidyl/O-phospho-L-threonyl-[pyruvate, phosphate dikinase] + phosphate + H(+) = N(tele)-phospho-L-histidyl/L-threonyl-[pyruvate, phosphate dikinase] + diphosphate. Functionally, bifunctional serine/threonine kinase and phosphorylase involved in the regulation of the pyruvate, phosphate dikinase (PPDK) by catalyzing its phosphorylation/dephosphorylation. In Bacillus subtilis (strain 168), this protein is Putative pyruvate, phosphate dikinase regulatory protein (yqfL).